An 857-amino-acid chain; its full sequence is DNA mismatch repair protein MutS (857 aa).

613-620 contributes to the ATP binding site; sequence GPNMGGKS. A disordered region spans residues 797–820; that stretch reads TSLPHEQPAAHKAKDAPQVPHQSD.

It belongs to the DNA mismatch repair MutS family.

In terms of biological role, this protein is involved in the repair of mismatches in DNA. It is possible that it carries out the mismatch recognition step. This protein has a weak ATPase activity. The polypeptide is DNA mismatch repair protein MutS (Pseudomonas putida (strain ATCC 47054 / DSM 6125 / CFBP 8728 / NCIMB 11950 / KT2440)).